The sequence spans 276 residues: MRESLKNSKRLVIKVGTSTLMYGNGHINLRTIEKLAMVLSDLRNEGKEVILVSSGAIGVGCHKLQLSVRPTSIPDLQAVASVGQSELMHIYSKFFGEYGQVVGQVLLTRDVTDFPISRENVMNTLDSLLSRGIIPIVNENDTVAVEELEHVTKYGDNDLLSAIVAKLVQADLLIMLSDIDGFYGSNPATDPEAVMFSEINQITPEIEALAGGRGSKFGTGGMLTKLSAASYCMDSNQKMILTNGKNPTVIFNIMQGEQIGTLFASKKEELSHDRTH.

Lysine 14 is a binding site for ATP. Residues serine 54, aspartate 141, and asparagine 157 each contribute to the substrate site. ATP-binding positions include 177-178 (SD) and 219-225 (TGGMLTK).

It belongs to the glutamate 5-kinase family.

The protein localises to the cytoplasm. The enzyme catalyses L-glutamate + ATP = L-glutamyl 5-phosphate + ADP. It functions in the pathway amino-acid biosynthesis; L-proline biosynthesis; L-glutamate 5-semialdehyde from L-glutamate: step 1/2. In terms of biological role, catalyzes the transfer of a phosphate group to glutamate to form L-glutamate 5-phosphate. The chain is Glutamate 5-kinase from Listeria monocytogenes serotype 4b (strain CLIP80459).